The chain runs to 105 residues: MYTSIYQNSYVVFIISLIVLLIIFYVFKIGYSTVVVNGKVEKRFNWKYPLAISLVIWVIWYFLLYPPSDVNINSSKQVGGTETSTIGDIVGSGVRQQKINMDNWL.

The next 2 helical transmembrane spans lie at 10–30 and 48–68; these read YVVF…FKIG and YPLA…YPPS.

Its subcellular location is the membrane. This is an uncharacterized protein from Acanthamoeba polyphaga mimivirus (APMV).